A 905-amino-acid chain; its full sequence is Coatomer subunit beta' (905 aa).

WD repeat units follow at residues 13–52 (AMSD…LVKT), 55–94 (VCDL…RVHM), 97–136 (AHSD…SCSQ), 140–180 (GHTH…PNFT), 183–224 (GHEK…CVQT), 227–266 (GHAQ…LEST), 350–388 (SCEI…NKSF), and 390–425 (SAQE…KSFK). The residue at position 627 (K627) is an N6-acetyllysine. The stretch at 746–783 (IRTGRLPEAAFLARTYLPSQVSRVVKLWRENLSKVNQK) is one WD 9 repeat. Residues 837–905 (EEAKRFQPSR…INLDEDILDD (69 aa)) are disordered. Residue S859 is modified to Phosphoserine. The stretch at 867 to 891 (QTTHKEEKSFQELEDDLDTMELEDI) forms a coiled coil. Over residues 878–905 (ELEDDLDTMELEDIDTTDINLDEDILDD) the composition is skewed to acidic residues.

Belongs to the WD repeat COPB2 family. Oligomeric complex that consists of at least the alpha, beta, beta', gamma, delta, epsilon and zeta subunits. Probably interacts with PEX11A. Interacts with JAGN1. Interacts with SCYL1.

It localises to the cytoplasm. The protein localises to the cytosol. Its subcellular location is the golgi apparatus membrane. The protein resides in the cytoplasmic vesicle. It is found in the COPI-coated vesicle membrane. In terms of biological role, the coatomer is a cytosolic protein complex that binds to dilysine motifs and reversibly associates with Golgi non-clathrin-coated vesicles, which further mediate biosynthetic protein transport from the ER, via the Golgi up to the trans Golgi network. Coatomer complex is required for budding from Golgi membranes, and is essential for the retrograde Golgi-to-ER transport of dilysine-tagged proteins. In mammals, the coatomer can only be recruited by membranes associated to ADP-ribosylation factors (ARFs), which are small GTP-binding proteins; the complex also influences the Golgi structural integrity, as well as the processing, activity, and endocytic recycling of LDL receptors. This coatomer complex protein, essential for Golgi budding and vesicular trafficking, is a selective binding protein (RACK) for protein kinase C, epsilon type. It binds to Golgi membranes in a GTP-dependent manner. This is Coatomer subunit beta' (Copb2) from Rattus norvegicus (Rat).